A 435-amino-acid chain; its full sequence is Gamma-glutamyl phosphate reductase (435 aa).

It belongs to the gamma-glutamyl phosphate reductase family.

The protein resides in the cytoplasm. It catalyses the reaction L-glutamate 5-semialdehyde + phosphate + NADP(+) = L-glutamyl 5-phosphate + NADPH + H(+). The protein operates within amino-acid biosynthesis; L-proline biosynthesis; L-glutamate 5-semialdehyde from L-glutamate: step 2/2. Functionally, catalyzes the NADPH-dependent reduction of L-glutamate 5-phosphate into L-glutamate 5-semialdehyde and phosphate. The product spontaneously undergoes cyclization to form 1-pyrroline-5-carboxylate. This Nostoc punctiforme (strain ATCC 29133 / PCC 73102) protein is Gamma-glutamyl phosphate reductase.